The following is a 518-amino-acid chain: Chromosomal replication initiator protein DnaA (518 aa).

The segment at 1–72 (MTLAEFWPLC…VREELAAGRS (72 aa)) is domain I, interacts with DnaA modulators. The tract at residues 72–180 (SAFVFKPGEG…DAEEARYEQT (109 aa)) is domain II. The segment at 181 to 397 (NLSPDYTFDT…GAFNRVGASS (217 aa)) is domain III, AAA+ region. Residues Gly225, Gly227, Lys228, and Thr229 each contribute to the ATP site. The tract at residues 398 to 518 (RFMNRPVIDI…YEKLLILIQN (121 aa)) is domain IV, binds dsDNA.

This sequence belongs to the DnaA family. In terms of assembly, oligomerizes as a right-handed, spiral filament on DNA at oriC.

Its subcellular location is the cytoplasm. Functionally, plays an essential role in the initiation and regulation of chromosomal replication. ATP-DnaA binds to the origin of replication (oriC) to initiate formation of the DNA replication initiation complex once per cell cycle. Binds the DnaA box (a 9 base pair repeat at the origin) and separates the double-stranded (ds)DNA. Forms a right-handed helical filament on oriC DNA; dsDNA binds to the exterior of the filament while single-stranded (ss)DNA is stabiized in the filament's interior. The ATP-DnaA-oriC complex binds and stabilizes one strand of the AT-rich DNA unwinding element (DUE), permitting loading of DNA polymerase. After initiation quickly degrades to an ADP-DnaA complex that is not apt for DNA replication. Binds acidic phospholipids. The protein is Chromosomal replication initiator protein DnaA of Neisseria meningitidis serogroup C / serotype 2a (strain ATCC 700532 / DSM 15464 / FAM18).